The sequence spans 623 residues: Isocitrate dehydrogenase kinase/phosphatase (623 aa).

Residues A344 to M350 and K365 contribute to the ATP site. D400 is an active-site residue.

The protein belongs to the AceK family.

It is found in the cytoplasm. It carries out the reaction L-seryl-[isocitrate dehydrogenase] + ATP = O-phospho-L-seryl-[isocitrate dehydrogenase] + ADP + H(+). Its function is as follows. Bifunctional enzyme which can phosphorylate or dephosphorylate isocitrate dehydrogenase (IDH) on a specific serine residue. This is a regulatory mechanism which enables bacteria to bypass the Krebs cycle via the glyoxylate shunt in response to the source of carbon. When bacteria are grown on glucose, IDH is fully active and unphosphorylated, but when grown on acetate or ethanol, the activity of IDH declines drastically concomitant with its phosphorylation. This Polaromonas naphthalenivorans (strain CJ2) protein is Isocitrate dehydrogenase kinase/phosphatase.